The primary structure comprises 356 residues: Nitrilase, arylacetone-specific (356 aa).

Residues 7–280 form the CN hydrolase domain; sequence VRAAAVQAAS…EGLIIADLNM (274 aa). Catalysis depends on Glu47, which acts as the Proton acceptor. The active-site Proton donor is the Lys129. Cys163 serves as the catalytic Nucleophile. Residues 324–356 are disordered; that stretch reads QEEAPEPHVQSTAAPVAVSQTQDSDTLLVQEPS. The span at 332 to 356 shows a compositional bias: polar residues; the sequence is VQSTAAPVAVSQTQDSDTLLVQEPS.

This sequence belongs to the carbon-nitrogen hydrolase superfamily. Nitrilase family. In terms of assembly, homohexamer.

The enzyme catalyses a nitrile + 2 H2O = a carboxylate + NH4(+). Its function is as follows. Nitrilase that acts mostly on arylacetonitriles. The sequence is that of Nitrilase, arylacetone-specific from Alcaligenes faecalis.